The primary structure comprises 310 residues: Mitochondrial 2-oxodicarboxylate carrier 1 (310 aa).

The next 6 helical transmembrane spans lie at 9–29, 78–97, 126–146, 179–199, 219–239, and 281–301; these read LPFIYQFTAGAIAGVSELLVM, SHLYKGITSPILMEAPKRAI, IYSGASAGAVEAFVVAPFELV, GLEATIWRHVLWNAGYFGIIF, LIAGAIGGTVGCLLNTPFDVV, and MRLAPGGGLLLVVFTNVMDFF. Solcar repeat units follow at residues 9–108, 120–204, and 213–300; these read LPFI…FQTF, MTQK…IRKL, and EKTR…VMDF.

This sequence belongs to the mitochondrial carrier (TC 2.A.29) family.

It localises to the mitochondrion inner membrane. Functionally, transports C5-C7 oxodicarboxylates across the inner membranes of mitochondria. Can transport 2-oxoadipate, 2-oxoglutarate, adipate, glutarate, 2-oxopimelate, oxaloacetate, citrate and malate. The main physiological role is probably to supply 2-oxoadipate and 2-oxoglutarate from the mitochondrial matrix to the cytosol where they are used in the biosynthesis of lysine and glutamate, respectively, and in lysine catabolism. The chain is Mitochondrial 2-oxodicarboxylate carrier 1 (ODC1) from Saccharomyces cerevisiae (strain ATCC 204508 / S288c) (Baker's yeast).